A 299-amino-acid chain; its full sequence is N-acetylaspartate synthetase (299 aa).

Pro residues predominate over residues 44–57 (AAPGPAAAPPPAAG). Residues 44–70 (AAPGPAAAPPPAAGPQPHGGTGGAGPP) form a disordered region. Residues 60-70 (PHGGTGGAGPP) show a composition bias toward gly residues. The helical transmembrane segment at 118–138 (YALLAALCFAVTRSLLLTCLV) threads the bilayer. The N-acetyltransferase domain occupies 143–280 (LALRYYYSRK…VLPGMTLSLA (138 aa)).

It belongs to the NAT8 family. Expressed in brain, including in mesencephalic dopaminergic neurons of the substantia nigra and ventral tegmental area and oligodendrocytes. Expressed in cortical pyramidal neurons and granule cells of the hippocampus (at protein level).

The protein resides in the cytoplasm. It localises to the microsome membrane. The protein localises to the mitochondrion membrane. It is found in the endoplasmic reticulum membrane. It carries out the reaction L-aspartate + acetyl-CoA = N-acetyl-L-aspartate + CoA + H(+). With respect to regulation, aminooxyacetic acid (AOAA) blocks its activity in both cytoplasm and mitochondria. Functionally, catalyzes the synthesis of N-acetylaspartate acid (NAA) from L-aspartate and acetyl-CoA. Promotes dopamine uptake by regulating TNF-alpha expression. Attenuates methamphetamine-induced inhibition of dopamine uptake. In Rattus norvegicus (Rat), this protein is N-acetylaspartate synthetase (Nat8l).